The sequence spans 155 residues: Large ribosomal subunit protein eL24 (155 aa).

The disordered stretch occupies residues 92 to 155 (AKRNMKPEVR…KSAPRVGGKR (64 aa)). The span at 96 to 117 (MKPEVRKAQRDQAIKAAKEQKK) shows a compositional bias: basic and acidic residues. Low complexity predominate over residues 124 to 133 (KASAPAPKAK).

The protein belongs to the eukaryotic ribosomal protein eL24 family.

This chain is Large ribosomal subunit protein eL24 (RpL24), found in Spodoptera frugiperda (Fall armyworm).